Consider the following 190-residue polypeptide: Carbonic anhydrase 2 (190 aa).

It belongs to the beta-class carbonic anhydrase family. Homohexamer.

It is found in the cytoplasm. It catalyses the reaction hydrogencarbonate + H(+) = CO2 + H2O. Its function is as follows. Reversible hydration of carbon dioxide. This is Carbonic anhydrase 2 from Flaveria linearis (Narrowleaf yellowtops).